A 339-amino-acid chain; its full sequence is Cathepsin B (339 aa).

The N-terminal stretch at 1 to 17 (MWQLWASLCCLLALADA) is a signal peptide. Positions 18 to 79 (RSRPSFHPLS…QRVMFTEDLK (62 aa)) are cleaved as a propeptide — activation peptide. 6 disulfide bridges follow: Cys-93-Cys-122, Cys-105-Cys-150, Cys-141-Cys-207, Cys-142-Cys-146, Cys-179-Cys-211, and Cys-187-Cys-198. Cys-108 is a catalytic residue. N-linked (GlcNAc...) asparagine glycosylation occurs at Asn-192. Lys-220 is subject to N6-acetyllysine. Residues His-278 and Asn-298 contribute to the active site. Positions 334 to 339 (QYWEKI) are excised as a propeptide.

Belongs to the peptidase C1 family. In terms of assembly, dimer of a heavy chain and a light chain cross-linked by a disulfide bond. Interacts with SRPX2. Directly interacts with SHKBP1.

The protein localises to the lysosome. It is found in the melanosome. The protein resides in the secreted. It localises to the extracellular space. Its subcellular location is the apical cell membrane. It catalyses the reaction Hydrolysis of proteins with broad specificity for peptide bonds. Preferentially cleaves -Arg-Arg-|-Xaa bonds in small molecule substrates (thus differing from cathepsin L). In addition to being an endopeptidase, shows peptidyl-dipeptidase activity, liberating C-terminal dipeptides.. Thiol protease which is believed to participate in intracellular degradation and turnover of proteins. Cleaves matrix extracellular phosphoglycoprotein MEPE. Involved in the solubilization of cross-linked TG/thyroglobulin in the thyroid follicle lumen. Has also been implicated in tumor invasion and metastasis. In Pongo abelii (Sumatran orangutan), this protein is Cathepsin B (CTSB).